The primary structure comprises 351 residues: MGHRKLASPRRGSAGLRPRKRSSELLPTPRTWPQINSPNPKLLGFVGYKVGMSHVFMIDDWPNSPTNGKEIYMPVTVLEVPPIIPLALRAYAVDGKGEPNVITEYWSPSSLQFLDITRRIRSFSSFLKNDESKKKFEEKFGSKLDLIKSNLDRIVYFRLLVATQPRKIPSLGKKVPDLVEIQIGGGEKKAQLDYALNVLGKEISIKDVFKEGQLIDVVGVTKGKGFAGVIKRYSVVELPRWHKHRKGSRKIGTRGPSLGTPSYTPQPGQLGFHRRTEYNKRIIKIGDDPKEINPAGGFVRYGIVRNTYILLEGSILGSKKRPIFLREAVRPSYVFENAPKITYVNLLSKQG.

2 disordered regions span residues 1 to 31 and 246 to 271; these read MGHR…TPRT and KGSR…GQLG.

This sequence belongs to the universal ribosomal protein uL3 family. Part of the 50S ribosomal subunit. Forms a cluster with proteins L14 and L24e.

In terms of biological role, one of the primary rRNA binding proteins, it binds directly near the 3'-end of the 23S rRNA, where it nucleates assembly of the 50S subunit. This Saccharolobus islandicus (strain M.16.27) (Sulfolobus islandicus) protein is Large ribosomal subunit protein uL3.